Here is a 161-residue protein sequence, read N- to C-terminus: UPF0178 protein PXO_00400 (161 aa).

It belongs to the UPF0178 family.

This chain is UPF0178 protein PXO_00400, found in Xanthomonas oryzae pv. oryzae (strain PXO99A).